Reading from the N-terminus, the 347-residue chain is 4-hydroxy-tetrahydrodipicolinate reductase 1, chloroplastic (347 aa).

Residues 1-51 constitute a chloroplast transit peptide; that stretch reads MATNGLMASSSVFLHRPRIAFASRTNQTVGKYGKGRVSFMGIGTRRLPVVL. Ser-52 is subject to N-acetylserine. NAD(+)-binding positions include 79-84, 171-173, and 194-197; these read GCSGKM, GTT, and SPQM. His-230 serves as the catalytic Proton donor/acceptor. Catalysis depends on Lys-234, which acts as the Proton donor. 239 to 240 lines the (S)-2,3,4,5-tetrahydrodipicolinate pocket; that stretch reads GT.

The protein belongs to the DapB family.

The protein resides in the plastid. Its subcellular location is the chloroplast. The enzyme catalyses (S)-2,3,4,5-tetrahydrodipicolinate + NAD(+) + H2O = (2S,4S)-4-hydroxy-2,3,4,5-tetrahydrodipicolinate + NADH + H(+). It carries out the reaction (S)-2,3,4,5-tetrahydrodipicolinate + NADP(+) + H2O = (2S,4S)-4-hydroxy-2,3,4,5-tetrahydrodipicolinate + NADPH + H(+). It functions in the pathway amino-acid biosynthesis; L-lysine biosynthesis via DAP pathway; (S)-tetrahydrodipicolinate from L-aspartate: step 4/4. Functionally, catalyzes the conversion of 4-hydroxy-tetrahydrodipicolinate (HTPA) to tetrahydrodipicolinate. This Arabidopsis thaliana (Mouse-ear cress) protein is 4-hydroxy-tetrahydrodipicolinate reductase 1, chloroplastic (DAPB1).